The primary structure comprises 219 residues: Elongation factor Ts (219 aa).

The segment at 82-85 (TDFV) is involved in Mg(2+) ion dislocation from EF-Tu.

Belongs to the EF-Ts family.

Its subcellular location is the cytoplasm. Associates with the EF-Tu.GDP complex and induces the exchange of GDP to GTP. It remains bound to the aminoacyl-tRNA.EF-Tu.GTP complex up to the GTP hydrolysis stage on the ribosome. In Anaeromyxobacter sp. (strain Fw109-5), this protein is Elongation factor Ts.